The chain runs to 380 residues: Putative 8-amino-7-oxononanoate synthase (380 aa).

Arginine 18 is a substrate binding site. Residue 105-106 (GY) participates in pyridoxal 5'-phosphate binding. Residue histidine 130 participates in substrate binding. Pyridoxal 5'-phosphate contacts are provided by residues serine 178, 204-207 (DEAH), and 235-238 (TFGK). Residue lysine 238 is modified to N6-(pyridoxal phosphate)lysine. Threonine 352 serves as a coordination point for substrate.

Belongs to the class-II pyridoxal-phosphate-dependent aminotransferase family. BioF subfamily. As to quaternary structure, homodimer. The cofactor is pyridoxal 5'-phosphate.

The catalysed reaction is 6-carboxyhexanoyl-[ACP] + L-alanine + H(+) = (8S)-8-amino-7-oxononanoate + holo-[ACP] + CO2. It functions in the pathway cofactor biosynthesis; biotin biosynthesis. Catalyzes the decarboxylative condensation of pimeloyl-[acyl-carrier protein] and L-alanine to produce 8-amino-7-oxononanoate (AON), [acyl-carrier protein], and carbon dioxide. This chain is Putative 8-amino-7-oxononanoate synthase (bioF), found in Glaesserella parasuis serovar 5 (strain SH0165) (Haemophilus parasuis).